The primary structure comprises 454 residues: Ribosomal protein uS12 methylthiotransferase RimO (454 aa).

One can recognise an MTTase N-terminal domain in the interval 9–124; it reads PKIGFVSLGC…VMDAVHLHMP (116 aa). [4Fe-4S] cluster is bound by residues C18, C54, C83, C155, C159, and C162. The 242-residue stretch at 141–382 folds into the Radical SAM core domain; sequence LTPKHFAYLK…MLLQEEISKK (242 aa). In terms of domain architecture, TRAM spans 385–454; sequence QAKVGKTMRV…ADAHDLWAEA (70 aa).

This sequence belongs to the methylthiotransferase family. RimO subfamily. The cofactor is [4Fe-4S] cluster.

It localises to the cytoplasm. It carries out the reaction L-aspartate(89)-[ribosomal protein uS12]-hydrogen + (sulfur carrier)-SH + AH2 + 2 S-adenosyl-L-methionine = 3-methylsulfanyl-L-aspartate(89)-[ribosomal protein uS12]-hydrogen + (sulfur carrier)-H + 5'-deoxyadenosine + L-methionine + A + S-adenosyl-L-homocysteine + 2 H(+). Its function is as follows. Catalyzes the methylthiolation of an aspartic acid residue of ribosomal protein uS12. This is Ribosomal protein uS12 methylthiotransferase RimO from Herminiimonas arsenicoxydans.